A 186-amino-acid polypeptide reads, in one-letter code: UPF0301 protein CGSHiEE_01530 (186 aa).

The protein belongs to the UPF0301 (AlgH) family.

In Haemophilus influenzae (strain PittEE), this protein is UPF0301 protein CGSHiEE_01530.